The chain runs to 36 residues: Fructose-1,6-/sedoheptulose-1,7-bisphosphate aldolase (36 aa).

The polypeptide is Fructose-1,6-/sedoheptulose-1,7-bisphosphate aldolase (cbbA) (Nitrobacter vulgaris).